Reading from the N-terminus, the 317-residue chain is Probable arabinan endo-1,5-alpha-L-arabinosidase C (317 aa).

The N-terminal stretch at 1–17 (MLSFLAALSLPLALVNA) is a signal peptide. The active-site Proton acceptor is the Asp-32. Residue Asn-190 is glycosylated (N-linked (GlcNAc...) asparagine). The Proton donor role is filled by Glu-198.

The protein belongs to the glycosyl hydrolase 43 family.

The protein localises to the secreted. The enzyme catalyses Endohydrolysis of (1-&gt;5)-alpha-arabinofuranosidic linkages in (1-&gt;5)-arabinans.. It functions in the pathway glycan metabolism; L-arabinan degradation. In terms of biological role, endo-1,5-alpha-L-arabinanase involved in degradation of pectin. Its preferred substrate is linear 1,5-alpha-L-arabinan. The chain is Probable arabinan endo-1,5-alpha-L-arabinosidase C (abnC) from Aspergillus flavus (strain ATCC 200026 / FGSC A1120 / IAM 13836 / NRRL 3357 / JCM 12722 / SRRC 167).